The sequence spans 121 residues: Large ribosomal subunit protein bL19 (121 aa).

Belongs to the bacterial ribosomal protein bL19 family.

This protein is located at the 30S-50S ribosomal subunit interface and may play a role in the structure and function of the aminoacyl-tRNA binding site. This Bifidobacterium adolescentis (strain ATCC 15703 / DSM 20083 / NCTC 11814 / E194a) protein is Large ribosomal subunit protein bL19.